A 940-amino-acid chain; its full sequence is Vacuolar protein sorting-associated protein 54 (940 aa).

Threonine 30 is subject to Phosphothreonine. Residues 192-218 form a disordered region; the sequence is QQLERDKPLENGAQGAPGPGTGGQTPT. The stretch at 299–325 forms a coiled coil; it reads HAILAEMEQAADQVRQLRAALAELHSH.

Belongs to the VPS54 family.

The protein localises to the golgi apparatus. Its subcellular location is the trans-Golgi network. Its function is as follows. May be involved in retrograde transport from early and late endosomes to late Golgi. Required during spermatogenesis for sperm individualization. This is Vacuolar protein sorting-associated protein 54 (scat) from Drosophila melanogaster (Fruit fly).